The following is a 521-amino-acid chain: MVKRRTVKYFLRRILALFVLCVPIYYLYTTVQRPPGYTKLKGSTRRKALIKKTFIESWTDYETYGWGKDEYYPIIKRGRNYLRKGMGWMIIDSLDTMMIMGLDEQVLRAREWVNNSLTWNQDDEEVSVFETTIRILGGLLSSYHLSQDKLYLDRAVDLADRLLAAYNTSTGLPRSNVNLGTRKSRKRTREYFVSTAESGTVQMELRYLSYLTGDPKYWITADKTMEVLLGDATWSHTGLVPITVNLITGAYVGRNIRLGSHGDSYYEYLLKQDLQLFSSGTVYRKAFDLSVDGIIEYLLNYTTPNHFAYIAELPGGLEHAQLPKMDHLVCFLPGTLMWGATNGTSLEAARTSKNWGTRQERDVKLAQELMRTCYEMYNMTATGLAPEIVFFDVDQTKNEIYSKRRDQHNLMRPETVESLFILYRITRDEIYREWGWNIFVSFLRYSRLPGRDAFTCLDSVESKKVKDQRDKTESFWFAETLKYLYLLFEDDFSILPLTNYTFNTEAHPFPNIENNMDLYTV.

The Cytoplasmic segment spans residues 1–8; sequence MVKRRTVK. A helical; Signal-anchor for type II membrane protein membrane pass occupies residues 9–31; that stretch reads YFLRRILALFVLCVPIYYLYTTV. Topologically, residues 32–521 are lumenal; that stretch reads QRPPGYTKLK…IENNMDLYTV (490 aa). 5 N-linked (GlcNAc...) asparagine glycosylation sites follow: N114, N167, N300, N342, and N378. C330 and C373 form a disulfide bridge. E387 acts as the Proton donor in catalysis. Residue N499 is glycosylated (N-linked (GlcNAc...) asparagine). T504 serves as a coordination point for Ca(2+).

The protein belongs to the glycosyl hydrolase 47 family. Requires Ca(2+) as cofactor.

Its subcellular location is the membrane. It carries out the reaction N(4)-(alpha-D-Man-(1-&gt;2)-alpha-D-Man-(1-&gt;2)-alpha-D-Man-(1-&gt;3)-[alpha-D-Man-(1-&gt;2)-alpha-D-Man-(1-&gt;3)-[alpha-D-Man-(1-&gt;2)-alpha-D-Man-(1-&gt;6)]-alpha-D-Man-(1-&gt;6)]-beta-D-Man-(1-&gt;4)-beta-D-GlcNAc-(1-&gt;4)-beta-D-GlcNAc)-L-asparaginyl-[protein] (N-glucan mannose isomer 9A1,2,3B1,2,3) + 4 H2O = N(4)-(alpha-D-Man-(1-&gt;3)-[alpha-D-Man-(1-&gt;3)-[alpha-D-Man-(1-&gt;6)]-alpha-D-Man-(1-&gt;6)]-beta-D-Man-(1-&gt;4)-beta-D-GlcNAc-(1-&gt;4)-beta-D-GlcNAc)-L-asparaginyl-[protein] (N-glucan mannose isomer 5A1,2) + 4 beta-D-mannose. The enzyme catalyses N(4)-(alpha-D-Man-(1-&gt;2)-alpha-D-Man-(1-&gt;2)-alpha-D-Man-(1-&gt;3)-[alpha-D-Man-(1-&gt;3)-[alpha-D-Man-(1-&gt;2)-alpha-D-Man-(1-&gt;6)]-alpha-D-Man-(1-&gt;6)]-beta-D-Man-(1-&gt;4)-beta-D-GlcNAc-(1-&gt;4)-beta-D-GlcNAc)-L-asparaginyl-[protein] (N-glucan mannose isomer 8A1,2,3B1,3) + 3 H2O = N(4)-(alpha-D-Man-(1-&gt;3)-[alpha-D-Man-(1-&gt;3)-[alpha-D-Man-(1-&gt;6)]-alpha-D-Man-(1-&gt;6)]-beta-D-Man-(1-&gt;4)-beta-D-GlcNAc-(1-&gt;4)-beta-D-GlcNAc)-L-asparaginyl-[protein] (N-glucan mannose isomer 5A1,2) + 3 beta-D-mannose. It participates in protein modification; protein glycosylation. Inhibited by kifunensine. Its function is as follows. Involved in glycoprotein quality control as it is important for the targeting of misfolded glycoproteins for degradation. It trims a single alpha-1,2-linked mannose residue from Man(9)GlcNAc(2) to produce Man(8)GlcNAc(2) with low efficiency. This Schizosaccharomyces pombe (strain 972 / ATCC 24843) (Fission yeast) protein is Endoplasmic reticulum mannosyl-oligosaccharide 1,2-alpha-mannosidase.